Here is a 294-residue protein sequence, read N- to C-terminus: Elongation factor Ts (294 aa).

Residues 80–83 (TDFV) form an involved in Mg(2+) ion dislocation from EF-Tu region.

The protein belongs to the EF-Ts family.

It localises to the cytoplasm. In terms of biological role, associates with the EF-Tu.GDP complex and induces the exchange of GDP to GTP. It remains bound to the aminoacyl-tRNA.EF-Tu.GTP complex up to the GTP hydrolysis stage on the ribosome. The protein is Elongation factor Ts of Polynucleobacter asymbioticus (strain DSM 18221 / CIP 109841 / QLW-P1DMWA-1) (Polynucleobacter necessarius subsp. asymbioticus).